The primary structure comprises 298 residues: MFSRAGVAGLSAWTLQPQWIQVRNMATLKDITRRLKSIKNIQKITKSMKMVAAAKYARAERELKPARIYGLGSLALYEKADIKVPEDKKKHLLIGVSSDRGLCGAIHSSIAKQMKSEVATLTAAGKEVMLVGIGDKIRGILYRTHSDQFLVAFKEVGRKPPTFGDASVIALELLNSGYEFDEGSVIFNRFRSVISYKTEEKPIFSLNTIASAESMSIYDDIDADVLQNYQEYNLANIIYYSLKESSTSEQSARMTAMDNASKNASEMIDKLTLTFNRTRQAVITKELIEIISGAAALD.

A mitochondrion-targeting transit peptide spans 1–25 (MFSRAGVAGLSAWTLQPQWIQVRNM). An N6-acetyllysine modification is found at Lys39. An N6-succinyllysine modification is found at Lys49. Position 55 is an N6-acetyllysine (Lys55). N6-acetyllysine; alternate is present on Lys115. Lys115 bears the N6-succinyllysine; alternate mark. Ser146 is subject to Phosphoserine. Lys154 carries the post-translational modification N6-acetyllysine; alternate. Position 154 is an N6-succinyllysine; alternate (Lys154). The residue at position 197 (Lys197) is an N6-acetyllysine. Lys270 bears the N6-succinyllysine mark.

Belongs to the ATPase gamma chain family. Component of the ATP synthase complex composed at least of ATP5F1A/subunit alpha, ATP5F1B/subunit beta, ATP5MC1/subunit c (homooctomer), MT-ATP6/subunit a, MT-ATP8/subunit 8, ATP5ME/subunit e, ATP5MF/subunit f, ATP5MG/subunit g, ATP5MK/subunit k, ATP5MJ/subunit j, ATP5F1C/subunit gamma, ATP5F1D/subunit delta, ATP5F1E/subunit epsilon, ATP5PF/subunit F6, ATP5PB/subunit b, ATP5PD/subunit d, ATP5PO/subunit OSCP. ATP synthase complex consists of a soluble F(1) head domain (subunits alpha(3) and beta(3)) - the catalytic core - and a membrane F(0) domain - the membrane proton channel (subunits c, a, 8, e, f, g, k and j). These two domains are linked by a central stalk (subunits gamma, delta, and epsilon) rotating inside the F1 region and a stationary peripheral stalk (subunits F6, b, d, and OSCP). Interacts with FLVCR2; this interaction occurs in the absence of heme and is disrupted upon heme binding.

Its subcellular location is the mitochondrion inner membrane. Functionally, subunit gamma, of the mitochondrial membrane ATP synthase complex (F(1)F(0) ATP synthase or Complex V) that produces ATP from ADP in the presence of a proton gradient across the membrane which is generated by electron transport complexes of the respiratory chain. ATP synthase complex consist of a soluble F(1) head domain - the catalytic core - and a membrane F(1) domain - the membrane proton channel. These two domains are linked by a central stalk rotating inside the F(1) region and a stationary peripheral stalk. During catalysis, ATP synthesis in the catalytic domain of F(1) is coupled via a rotary mechanism of the central stalk subunits to proton translocation. In vivo, can only synthesize ATP although its ATP hydrolase activity can be activated artificially in vitro. With the central stalk subunit delta, is essential for the biogenesis of F(1) catalytic part of the ATP synthase complex namely in the formation of F1 assembly intermediate. In Macaca fascicularis (Crab-eating macaque), this protein is ATP synthase F(1) complex subunit gamma, mitochondrial.